The sequence spans 330 residues: Phospho-N-acetylmuramoyl-pentapeptide-transferase (330 aa).

10 helical membrane-spanning segments follow: residues 3–23 (SVVL…SSFI), 49–69 (TPTM…AVVA), 71–91 (PNPA…VGLY), 111–131 (FLLL…YVGV), 145–165 (VLGP…FVIV), 179–199 (GLAA…AFLE), 204–224 (LAII…YNSH), 228–248 (IFMG…AAIL), 256–276 (PVIG…VVVF), and 307–327 (FWIV…FFLY).

The protein belongs to the glycosyltransferase 4 family. MraY subfamily. Mg(2+) is required as a cofactor.

Its subcellular location is the cell membrane. The catalysed reaction is UDP-N-acetyl-alpha-D-muramoyl-L-alanyl-gamma-D-glutamyl-meso-2,6-diaminopimeloyl-D-alanyl-D-alanine + di-trans,octa-cis-undecaprenyl phosphate = di-trans,octa-cis-undecaprenyl diphospho-N-acetyl-alpha-D-muramoyl-L-alanyl-D-glutamyl-meso-2,6-diaminopimeloyl-D-alanyl-D-alanine + UMP. The protein operates within cell wall biogenesis; peptidoglycan biosynthesis. Its function is as follows. Catalyzes the initial step of the lipid cycle reactions in the biosynthesis of the cell wall peptidoglycan: transfers peptidoglycan precursor phospho-MurNAc-pentapeptide from UDP-MurNAc-pentapeptide onto the lipid carrier undecaprenyl phosphate, yielding undecaprenyl-pyrophosphoryl-MurNAc-pentapeptide, known as lipid I. The sequence is that of Phospho-N-acetylmuramoyl-pentapeptide-transferase from Rubrobacter xylanophilus (strain DSM 9941 / JCM 11954 / NBRC 16129 / PRD-1).